The following is a 78-amino-acid chain: Small ribosomal subunit protein eS21 (78 aa).

The protein belongs to the eukaryotic ribosomal protein eS21 family.

The sequence is that of Small ribosomal subunit protein eS21 (rps21) from Dictyostelium discoideum (Social amoeba).